We begin with the raw amino-acid sequence, 142 residues long: HTH-type transcriptional regulator LrpA1 (142 aa).

The 72-residue stretch at 1 to 72 (MSTESTEERI…GQSIAMVGID (72 aa)) folds into the HTH asnC-type domain. The H-T-H motif DNA-binding region spans 22–41 (YAAIAERADVSKPTVRKYID).

In terms of biological role, transcription factor that regulates genes involved in amino acid metabolism. Represses the aspB3 gene, coding for an aspartate transaminase, in the presence of L-aspartate. Another target gene is the basal transcriptional regulator tfbB. Also binds its own promoter. The protein is HTH-type transcriptional regulator LrpA1 (lrpA1) of Halobacterium salinarum (strain ATCC 29341 / DSM 671 / R1).